The following is a 371-amino-acid chain: Chaperone protein DnaJ (371 aa).

The J domain occupies 5-69; sequence DYYEVLGLSK…QKRAQYDQFG (65 aa). Residues 133-215 form a CR-type zinc finger; that stretch reads GKELNVEIPV…CHGSGKVRKR (83 aa). Positions 146, 149, 163, 166, 189, 192, 203, and 206 each coordinate Zn(2+). CXXCXGXG motif repeat units follow at residues 146-153, 163-170, 189-196, and 203-210; these read CDTCKGSG, CKHCSGSG, CSHCSGTG, and CTTCHGSG.

It belongs to the DnaJ family. In terms of assembly, homodimer. The cofactor is Zn(2+).

It is found in the cytoplasm. Participates actively in the response to hyperosmotic and heat shock by preventing the aggregation of stress-denatured proteins and by disaggregating proteins, also in an autonomous, DnaK-independent fashion. Unfolded proteins bind initially to DnaJ; upon interaction with the DnaJ-bound protein, DnaK hydrolyzes its bound ATP, resulting in the formation of a stable complex. GrpE releases ADP from DnaK; ATP binding to DnaK triggers the release of the substrate protein, thus completing the reaction cycle. Several rounds of ATP-dependent interactions between DnaJ, DnaK and GrpE are required for fully efficient folding. Also involved, together with DnaK and GrpE, in the DNA replication of plasmids through activation of initiation proteins. This chain is Chaperone protein DnaJ, found in Bacillus anthracis (strain A0248).